The sequence spans 261 residues: Ribonuclease PH (261 aa).

Residues Arg87 and 125-127 (GTR) each bind phosphate.

It belongs to the RNase PH family. Homohexameric ring arranged as a trimer of dimers.

It catalyses the reaction tRNA(n+1) + phosphate = tRNA(n) + a ribonucleoside 5'-diphosphate. Its function is as follows. Phosphorolytic 3'-5' exoribonuclease that plays an important role in tRNA 3'-end maturation. Removes nucleotide residues following the 3'-CCA terminus of tRNAs; can also add nucleotides to the ends of RNA molecules by using nucleoside diphosphates as substrates, but this may not be physiologically important. Probably plays a role in initiation of 16S rRNA degradation (leading to ribosome degradation) during starvation. This is Ribonuclease PH from Caldanaerobacter subterraneus subsp. tengcongensis (strain DSM 15242 / JCM 11007 / NBRC 100824 / MB4) (Thermoanaerobacter tengcongensis).